Consider the following 434-residue polypeptide: Eukaryotic translation initiation factor 3 subunit E (434 aa).

Residues 219 to 392 (FFNHPKGRDL…GHVVMGTQPL (174 aa)) enclose the PCI domain.

The protein belongs to the eIF-3 subunit E family. As to quaternary structure, component of the eukaryotic translation initiation factor 3 (eIF-3) complex. The eIF-3 complex interacts with pix. Interacts with mxt.

It is found in the cytoplasm. Functionally, component of the eukaryotic translation initiation factor 3 (eIF-3) complex, which is involved in protein synthesis of a specialized repertoire of mRNAs and, together with other initiation factors, stimulates binding of mRNA and methionyl-tRNAi to the 40S ribosome. The eIF-3 complex specifically targets and initiates translation of a subset of mRNAs involved in cell proliferation. In Drosophila pseudoobscura pseudoobscura (Fruit fly), this protein is Eukaryotic translation initiation factor 3 subunit E (eIF3-S6).